We begin with the raw amino-acid sequence, 270 residues long: MNCFQEKQFSRENLLKMPFRMVLTGGSGSGKTIYLLSLFSTLVKKYKHIFLFTPVYNPDYDGYIWPNHINFVSSQESLEYNLIRTKSNIEKCIAVAQNHKKSAHFLLIFDDVGDKLSKCNTLIEFLNFGRHLNTSIILLCQTYRHVPILGRANITHFCSFNISISDAENMLRSMPVKGKRKDILNMLNMIQTARSNNRLAIIIEDSVFCEGELRICTDTADKDVIEQKLNIDILVNQYSHMKKNLNAILESKKTKLCNSDQSSSSKNVSS.

Residue 55 to 62 coordinates ATP; it reads VYNPDYDG.

The protein belongs to the orthopoxvirus OPG160 protein family. Interacts with protein OPG137.

Its function is as follows. Participates in viral DNA packaging and virion morphogenesis. This is DNA packaging protein OPG160 (OPG160) from Homo sapiens (Human).